Consider the following 344-residue polypeptide: Cyclin-G2 (344 aa).

Over residues 301-313 the composition is skewed to acidic residues; sequence ESESEDSCEDMSC. Residues 301-320 form a disordered region; it reads ESESEDSCEDMSCGEESLSS.

It belongs to the cyclin family. Cyclin G subfamily. High levels in cerebellum, thymus, spleen and prostate. Low levels in skeletal muscle.

It is found in the cytoplasm. Functionally, may play a role in growth regulation and in negative regulation of cell cycle progression. The sequence is that of Cyclin-G2 (CCNG2) from Homo sapiens (Human).